Consider the following 492-residue polypeptide: Ketol-acid reductoisomerase (NADP(+)) (492 aa).

The 195-residue stretch at 14–208 folds into the KARI N-terminal Rossmann domain; the sequence is LDQLGRCRFM…GGHKAGVLES (195 aa). Residues 45–48, arginine 68, arginine 76, serine 78, and 108–110 contribute to the NADP(+) site; these read CGAQ and DKQ. Histidine 132 is a catalytic residue. Glycine 158 contributes to the NADP(+) binding site. 2 KARI C-terminal knotted domains span residues 209-344 and 345-485; these read SFVA…NAPK and YDGK…MTDM. Mg(2+)-binding residues include aspartate 217, glutamate 221, glutamate 389, and glutamate 393. Serine 414 contacts substrate.

This sequence belongs to the ketol-acid reductoisomerase family. Requires Mg(2+) as cofactor.

The enzyme catalyses (2R)-2,3-dihydroxy-3-methylbutanoate + NADP(+) = (2S)-2-acetolactate + NADPH + H(+). The catalysed reaction is (2R,3R)-2,3-dihydroxy-3-methylpentanoate + NADP(+) = (S)-2-ethyl-2-hydroxy-3-oxobutanoate + NADPH + H(+). It functions in the pathway amino-acid biosynthesis; L-isoleucine biosynthesis; L-isoleucine from 2-oxobutanoate: step 2/4. Its pathway is amino-acid biosynthesis; L-valine biosynthesis; L-valine from pyruvate: step 2/4. Involved in the biosynthesis of branched-chain amino acids (BCAA). Catalyzes an alkyl-migration followed by a ketol-acid reduction of (S)-2-acetolactate (S2AL) to yield (R)-2,3-dihydroxy-isovalerate. In the isomerase reaction, S2AL is rearranged via a Mg-dependent methyl migration to produce 3-hydroxy-3-methyl-2-ketobutyrate (HMKB). In the reductase reaction, this 2-ketoacid undergoes a metal-dependent reduction by NADPH to yield (R)-2,3-dihydroxy-isovalerate. This is Ketol-acid reductoisomerase (NADP(+)) from Haemophilus influenzae (strain 86-028NP).